A 205-amino-acid chain; its full sequence is dITP/XTP pyrophosphatase (205 aa).

8–13 (SGNKGK) contacts substrate. The active-site Proton acceptor is Asp-69. Residue Asp-69 participates in Mg(2+) binding. Substrate contacts are provided by residues Ser-70, 153–156 (HGYD), Lys-176, and 181–182 (HR).

This sequence belongs to the HAM1 NTPase family. As to quaternary structure, homodimer. Requires Mg(2+) as cofactor.

It carries out the reaction XTP + H2O = XMP + diphosphate + H(+). The catalysed reaction is dITP + H2O = dIMP + diphosphate + H(+). It catalyses the reaction ITP + H2O = IMP + diphosphate + H(+). In terms of biological role, pyrophosphatase that catalyzes the hydrolysis of nucleoside triphosphates to their monophosphate derivatives, with a high preference for the non-canonical purine nucleotides XTP (xanthosine triphosphate), dITP (deoxyinosine triphosphate) and ITP. Seems to function as a house-cleaning enzyme that removes non-canonical purine nucleotides from the nucleotide pool, thus preventing their incorporation into DNA/RNA and avoiding chromosomal lesions. The protein is dITP/XTP pyrophosphatase of Shewanella oneidensis (strain ATCC 700550 / JCM 31522 / CIP 106686 / LMG 19005 / NCIMB 14063 / MR-1).